Here is a 368-residue protein sequence, read N- to C-terminus: Phosphoserine aminotransferase (368 aa).

R44 is a binding site for L-glutamate. Residues 78–79, W104, T157, D179, and Q202 contribute to the pyridoxal 5'-phosphate site; that span reads AT. The residue at position 203 (K203) is an N6-(pyridoxal phosphate)lysine. Residue 244 to 245 participates in pyridoxal 5'-phosphate binding; sequence NT.

It belongs to the class-V pyridoxal-phosphate-dependent aminotransferase family. SerC subfamily. In terms of assembly, homodimer. The cofactor is pyridoxal 5'-phosphate.

Its subcellular location is the cytoplasm. The enzyme catalyses O-phospho-L-serine + 2-oxoglutarate = 3-phosphooxypyruvate + L-glutamate. It catalyses the reaction 4-(phosphooxy)-L-threonine + 2-oxoglutarate = (R)-3-hydroxy-2-oxo-4-phosphooxybutanoate + L-glutamate. It functions in the pathway amino-acid biosynthesis; L-serine biosynthesis; L-serine from 3-phospho-D-glycerate: step 2/3. The protein operates within cofactor biosynthesis; pyridoxine 5'-phosphate biosynthesis; pyridoxine 5'-phosphate from D-erythrose 4-phosphate: step 3/5. Functionally, catalyzes the reversible conversion of 3-phosphohydroxypyruvate to phosphoserine and of 3-hydroxy-2-oxo-4-phosphonooxybutanoate to phosphohydroxythreonine. The protein is Phosphoserine aminotransferase of Neisseria gonorrhoeae (strain ATCC 700825 / FA 1090).